Consider the following 427-residue polypeptide: Peptidase B (427 aa).

Mn(2+) is bound by residues Lys195 and Asp200. Lys207 is a catalytic residue. Mn(2+)-binding residues include Asp218, Asp277, and Glu279. Arg281 is an active-site residue.

Belongs to the peptidase M17 family. In terms of assembly, homohexamer. Mn(2+) serves as cofactor.

The protein resides in the cytoplasm. The enzyme catalyses Release of an N-terminal amino acid, Xaa, from a peptide or arylamide. Xaa is preferably Glu or Asp but may be other amino acids, including Leu, Met, His, Cys and Gln.. Functionally, probably plays an important role in intracellular peptide degradation. The polypeptide is Peptidase B (Salmonella typhi).